We begin with the raw amino-acid sequence, 62 residues long: Large ribosomal subunit protein uL29 (62 aa).

Belongs to the universal ribosomal protein uL29 family.

The chain is Large ribosomal subunit protein uL29 from Oleidesulfovibrio alaskensis (strain ATCC BAA-1058 / DSM 17464 / G20) (Desulfovibrio alaskensis).